Here is a 669-residue protein sequence, read N- to C-terminus: RNA-binding protein 14 (669 aa).

RRM domains follow at residues 1-73 (MKIF…MSRP) and 79-149 (WKIF…LSTK). Residues K126, K135, K138, K149, and K153 each participate in a glycyl lysine isopeptide (Lys-Gly) (interchain with G-Cter in SUMO2) cross-link. 2 disordered regions span residues 148 to 175 (TKGQKKGPGLAIQSGDKTKKPGAGDTAF) and 193 to 232 (NSTGGFDGQARQPTPPFFGRDRSPLRRSPPRASYVAPLTA). The residue at position 161 (S161) is a Phosphoserine. The residue at position 164 (K164) is an N6-acetyllysine; alternate. Residue K164 forms a Glycyl lysine isopeptide (Lys-Gly) (interchain with G-Cter in SUMO2); alternate linkage. T206 bears the Phosphothreonine mark. S220, S242, S244, S256, S272, and S280 each carry phosphoserine. The tract at residues 284-303 (PYRGQLASPSSQSAAASSLG) is disordered. Residues 287 to 303 (GQLASPSSQSAAASSLG) are compositionally biased toward low complexity. Residues 307 to 354 (GAQPSASALSSYGGQPAAASSLNSYGAQGSSLASYGNQPSSYGAQAAS) are TRBP-interacting domain; interaction with STIL. A phosphoserine mark is found at S520, S523, S527, and S562. The tract at residues 569 to 590 (ANSTPPPYERTRLSPPRASYDD) is disordered. Phosphothreonine is present on T572. S582 carries the phosphoserine modification. K600 participates in a covalent cross-link: Glycyl lysine isopeptide (Lys-Gly) (interchain with G-Cter in SUMO2). 6 positions are modified to phosphoserine: S618, S620, S623, S627, S643, and S649.

Interacts with NCOA6, CITED1 and XRCC5/KU86. Interacts with SS18. Interacts with STIL and interferes with its interaction with CPAP. Interacts with gamma-tubulin. Part of the HDP-RNP complex composed of at least HEXIM1, PRKDC, XRCC5, XRCC6, paraspeckle proteins (SFPQ, NONO, PSPC1, RBM14, and MATR3) and NEAT1 RNA.

The protein localises to the nucleus. It localises to the nucleolus. It is found in the cytoplasm. In terms of biological role, may function as a nuclear receptor coactivator, enhancing transcription through other coactivators such as NCOA6 and CITED1. Regulates centriole biogenesis by suppressing the formation of aberrant centriolar protein complexes in the cytoplasm and thus preserving mitotic spindle integrity. Prevents the formation of the STIL-CPAP complex (which can induce the formation of aberrant centriolar protein complexes) by interfering with the interaction of STIL with CPAP. Plays a role in the regulation of DNA virus-mediated innate immune response by assembling into the HDP-RNP complex, a complex that serves as a platform for IRF3 phosphorylation and subsequent innate immune response activation through the cGAS-STING pathway. The sequence is that of RNA-binding protein 14 (RBM14) from Bos taurus (Bovine).